We begin with the raw amino-acid sequence, 501 residues long: Cobyric acid synthase (501 aa).

One can recognise a GATase cobBQ-type domain in the interval 253–450; sequence EIEIAVLKLP…LHGIFENGRW (198 aa). Catalysis depends on Cys334, which acts as the Nucleophile. Residue His442 is part of the active site.

It belongs to the CobB/CobQ family. CobQ subfamily.

Its pathway is cofactor biosynthesis; adenosylcobalamin biosynthesis. Catalyzes amidations at positions B, D, E, and G on adenosylcobyrinic A,C-diamide. NH(2) groups are provided by glutamine, and one molecule of ATP is hydrogenolyzed for each amidation. This is Cobyric acid synthase from Prochlorococcus marinus (strain MIT 9313).